The following is a 332-amino-acid chain: Geranylgeranyl pyrophosphate synthase dpasD (332 aa).

Positions 55, 58, and 87 each coordinate isopentenyl diphosphate. Residues aspartate 94 and aspartate 98 each coordinate Mg(2+). Arginine 103 lines the dimethylallyl diphosphate pocket. Residue arginine 104 coordinates isopentenyl diphosphate. 3 residues coordinate dimethylallyl diphosphate: lysine 181, threonine 182, and glutamine 215. Residue aspartate 218 coordinates Mg(2+). Dimethylallyl diphosphate-binding residues include asparagine 222, lysine 232, and lysine 242.

Belongs to the FPP/GGPP synthase family. It depends on Mg(2+) as a cofactor.

The catalysed reaction is isopentenyl diphosphate + dimethylallyl diphosphate = (2E)-geranyl diphosphate + diphosphate. It carries out the reaction isopentenyl diphosphate + (2E)-geranyl diphosphate = (2E,6E)-farnesyl diphosphate + diphosphate. The enzyme catalyses isopentenyl diphosphate + (2E,6E)-farnesyl diphosphate = (2E,6E,10E)-geranylgeranyl diphosphate + diphosphate. Its pathway is secondary metabolite biosynthesis; terpenoid biosynthesis. Geranylgeranyl pyrophosphate synthase; part of the gene cluster that mediates the biosynthesis of the diterpenoid pyrones subglutinols A and B. The first step of the pathway is the synthesis of the alpha-pyrone moiety by the polyketide synthase dpasA via condensation of one acetyl-CoA starter unit with 3 malonyl-CoA units and 2 methylations. The alpha-pyrone is then combined with geranylgeranyl pyrophosphate (GGPP) formed by the GGPP synthase dpasD through the action of the prenyltransferase dpasC to yield a linear alpha-pyrone diterpenoid. Subsequent steps in the diterpenoid pyrone biosynthetic pathway involve the decalin core formation, which is initiated by the epoxidation of the C10-C11 olefin by the FAD-dependent oxidoreductase dpasE, and is followed by a cyclization cascade catalyzed by the terpene cyclase dpasB. The FAD-linked oxidoreductase dpasF is then involved in tetrahydrofuran (THF) ring formation at the C5 unit to complete the formation of subglutinols A and B. DpasF also possesses an additional catalytic ability of multi-step oxidations to generate a new DDP analog with an enone system at the C5 named FDDP A. The polypeptide is Geranylgeranyl pyrophosphate synthase dpasD (Apiospora sacchari (Arthrinium sacchari)).